The following is a 149-amino-acid chain: UPF0179 protein Mbar_A0292 (149 aa).

The protein belongs to the UPF0179 family.

The sequence is that of UPF0179 protein Mbar_A0292 from Methanosarcina barkeri (strain Fusaro / DSM 804).